A 413-amino-acid polypeptide reads, in one-letter code: Multifunctional CCA protein (413 aa).

Residues glycine 8 and arginine 11 each contribute to the ATP site. Residues glycine 8 and arginine 11 each contribute to the CTP site. Positions 21 and 23 each coordinate Mg(2+). The ATP site is built by arginine 91, arginine 143, and arginine 146. Arginine 91, arginine 143, and arginine 146 together coordinate CTP. The HD domain occupies 232-333 (TGVHVMMVID…VRLLERADAL (102 aa)).

This sequence belongs to the tRNA nucleotidyltransferase/poly(A) polymerase family. Bacterial CCA-adding enzyme type 1 subfamily. As to quaternary structure, monomer. Can also form homodimers and oligomers. Requires Mg(2+) as cofactor. Ni(2+) is required as a cofactor.

The catalysed reaction is a tRNA precursor + 2 CTP + ATP = a tRNA with a 3' CCA end + 3 diphosphate. It carries out the reaction a tRNA with a 3' CCA end + 2 CTP + ATP = a tRNA with a 3' CCACCA end + 3 diphosphate. In terms of biological role, catalyzes the addition and repair of the essential 3'-terminal CCA sequence in tRNAs without using a nucleic acid template. Adds these three nucleotides in the order of C, C, and A to the tRNA nucleotide-73, using CTP and ATP as substrates and producing inorganic pyrophosphate. tRNA 3'-terminal CCA addition is required both for tRNA processing and repair. Also involved in tRNA surveillance by mediating tandem CCA addition to generate a CCACCA at the 3' terminus of unstable tRNAs. While stable tRNAs receive only 3'-terminal CCA, unstable tRNAs are marked with CCACCA and rapidly degraded. In Burkholderia pseudomallei (strain 668), this protein is Multifunctional CCA protein.